A 516-amino-acid polypeptide reads, in one-letter code: HMG box-containing protein 1 (516 aa).

Residues 150–182 form a disordered region; that stretch reads ARPPPVSSSSKSGPAFPHDHWKEETPVRHERAN. Residues 156–165 show a composition bias toward low complexity; it reads SSSSKSGPAF. The span at 166-182 shows a compositional bias: basic and acidic residues; sequence PHDHWKEETPVRHERAN. The region spanning 203–345 is the AXH domain; that stretch reads WCNSWPSTIW…PPGHPDAINF (143 aa). Residues 436-504 constitute a DNA-binding region (HMG box); that stretch reads CKRPMNAFML…EQKRLNPDCW (69 aa).

In terms of assembly, binds TCF4. Binds RB1. Binds the second PAH repeat of SIN3A. Ubiquitinated by the CTLH E3 ubiquitin-protein ligase complex, leading to subsequent proteasomal degradation.

Its subcellular location is the nucleus. Functionally, transcriptional repressor that binds to the promoter region of target genes. Plays a role in the regulation of the cell cycle and of the Wnt pathway. Binds preferentially to the sequence 5'-TTCATTCATTCA-3'. Binding to the histone H1.0 promoter is enhanced by interaction with RB1. Disrupts the interaction between DNA and TCF4. In Mus musculus (Mouse), this protein is HMG box-containing protein 1 (Hbp1).